Consider the following 610-residue polypeptide: Elongation factor 4 (610 aa).

The tr-type G domain maps to 15–197; the sequence is KSIRNFSIIA…RIINDIPYPK (183 aa). Residues 27-32 and 144-147 contribute to the GTP site; these read DHGKST and NKID.

The protein belongs to the TRAFAC class translation factor GTPase superfamily. Classic translation factor GTPase family. LepA subfamily.

It is found in the cell membrane. It catalyses the reaction GTP + H2O = GDP + phosphate + H(+). Its function is as follows. Required for accurate and efficient protein synthesis under certain stress conditions. May act as a fidelity factor of the translation reaction, by catalyzing a one-codon backward translocation of tRNAs on improperly translocated ribosomes. Back-translocation proceeds from a post-translocation (POST) complex to a pre-translocation (PRE) complex, thus giving elongation factor G a second chance to translocate the tRNAs correctly. Binds to ribosomes in a GTP-dependent manner. This is Elongation factor 4 from Buchnera aphidicola subsp. Acyrthosiphon pisum (strain APS) (Acyrthosiphon pisum symbiotic bacterium).